The sequence spans 152 residues: Small heat shock protein HspA (152 aa).

The 111-residue stretch at 29–139 (TAGEANYPPC…KPRRIPIDNL (111 aa)) folds into the sHSP domain.

This sequence belongs to the small heat shock protein (HSP20) family.

In Bradyrhizobium diazoefficiens (strain JCM 10833 / BCRC 13528 / IAM 13628 / NBRC 14792 / USDA 110), this protein is Small heat shock protein HspA (hspA).